The primary structure comprises 250 residues: Ubiquitin-conjugating enzyme E2 6 (250 aa).

Topologically, residues 1–232 (MATKQAHKRL…DGKEPNDSSS (232 aa)) are cytoplasmic. Residues 5–167 (QAHKRLTKEY…VQENVETLEK (163 aa)) form the UBC core domain. The Glycyl thioester intermediate role is filled by Cys87. Ser139 carries the post-translational modification Phosphoserine. Thr178 carries the phosphothreonine modification. The interval 209-229 (AEQALRQSENNSKKDGKEPND) is disordered. Positions 219-228 (NSKKDGKEPN) are enriched in basic and acidic residues. A helical transmembrane segment spans residues 233-249 (MVYIGIAIFLFLVGLFM).

This sequence belongs to the ubiquitin-conjugating enzyme family.

Its subcellular location is the endoplasmic reticulum membrane. The enzyme catalyses S-ubiquitinyl-[E1 ubiquitin-activating enzyme]-L-cysteine + [E2 ubiquitin-conjugating enzyme]-L-cysteine = [E1 ubiquitin-activating enzyme]-L-cysteine + S-ubiquitinyl-[E2 ubiquitin-conjugating enzyme]-L-cysteine.. It participates in protein modification; protein ubiquitination. Catalyzes the covalent attachment of ubiquitin to other proteins. Functions in degradation of misfolded or regulated proteins localized in the endoplasmic reticulum (ER) lumen or membrane via the ubiquitin-proteasome system. Cognate E2 conjugating enzyme for the DOA10 ubiquitin ligase complex, which is part of the ERAD-C pathway responsible for the rapid degradation of membrane proteins with misfolded cytoplasmic domains. This Saccharomyces cerevisiae (strain ATCC 204508 / S288c) (Baker's yeast) protein is Ubiquitin-conjugating enzyme E2 6 (UBC6).